Here is a 189-residue protein sequence, read N- to C-terminus: UPF0301 protein PSPA7_0505 (189 aa).

It belongs to the UPF0301 (AlgH) family.

In Pseudomonas paraeruginosa (strain DSM 24068 / PA7) (Pseudomonas aeruginosa (strain PA7)), this protein is UPF0301 protein PSPA7_0505.